Reading from the N-terminus, the 626-residue chain is Basic helix-loop-helix ARNT-like protein 1 (626 aa).

The segment at 1 to 60 (MADQRMDISSTISDFMSPGPTDLLSSSLGTSGVDCNRKRKGSSTDYQESMDTDKDDPHGR) is disordered. Serine 17 carries the post-translational modification Phosphoserine; by GSK3-beta. Residues 17-32 (SPGPTDLLSSSLGTSG) show a composition bias toward low complexity. A Phosphothreonine; by GSK3-beta modification is found at threonine 21. The Nuclear localization signal motif lies at 36–41 (NRKRKG). Positions 51–60 (DTDKDDPHGR) are enriched in basic and acidic residues. One can recognise a bHLH domain in the interval 72 to 125 (NAREAHSQIEKRRRDKMNSFIDELASLVPTCNAMSRKLDKLTVLRMAVQHMKTL). Residue serine 78 is modified to Phosphoserine. Serine 90 is modified (phosphoserine; by CK2). The Nuclear export signal 1 motif lies at 142 to 152 (LSDDELKHLIL). Residues 143-215 (SDDELKHLIL…EQLSSSDTAP (73 aa)) enclose the PAS 1 domain. Residue lysine 252 forms a Glycyl lysine isopeptide (Lys-Gly) (interchain with G-Cter in SUMO2 and SUMO3) linkage. Residue lysine 259 forms a Glycyl lysine isopeptide (Lys-Gly) (interchain with G-Cter in SUMO2) linkage. A PAS 2 domain is found at 326–396 (PQPVNGEIRV…ECHRQVLQTR (71 aa)). Positions 361–369 (LAYLPQELL) match the Nuclear export signal 2 motif. Residues 401–444 (TNCYKFKIKDGSFITLRSRWFSFMNPWTKEVEYIVSTNTVVLAN) form the PAC domain. 2 disordered regions span residues 458-493 (ASPH…AGAG) and 511-595 (GSSP…SPSN). The segment covering 484-493 (IPGGTRAGAG) has biased composition (gly residues). The interaction with CIART stretch occupies residues 508-588 (RIRGSSPSSC…IGIDMIDNDQ (81 aa)). The segment covering 511–521 (GSSPSSCGSSP) has biased composition (low complexity). Residue lysine 538 is modified to N6-acetyllysine.

Component of the circadian clock oscillator which includes the CRY1/2 proteins, CLOCK or NPAS2,BMAL1 or BMAL2, CSNK1D and/or CSNK1E, TIMELESS and the PER1/2/3 proteins. Forms a heterodimer with CLOCK. The CLOCK-BMAL1 heterodimer is required for E-box-dependent transactivation, for CLOCK nuclear translocation and degradation, and, for phosphorylation of both CLOCK and BMAL1. Part of a nuclear complex which also includes RACK1 and PRKCA; RACK1 and PRKCA are recruited to the complex in a circadian manner. Interacts with NPAS2. Interacts with EZH2. Interacts with SUMO3. Interacts with SIRT1. Interacts with AHR. Interacts with ID1, ID2 and ID3. Interacts with DDX4. Interacts with OGT. Interacts with EED and SUZ12. Interacts with MTA1. Interacts with CIART. Interacts with HSP90. Interacts with KAT2B and EP300. Interacts with BHLHE40/DEC1 and BHLHE41/DEC2. Interacts with RELB and the interaction is enhanced in the presence of CLOCK. Interacts with PER1, PER2, CRY1 and CRY2 and this interaction requires a translocation to the nucleus. Interaction of the CLOCK-BMAL1 heterodimer with PER or CRY inhibits transcription activation. Interaction of the CLOCK-BMAL1 with CRY1 is independent of DNA but with PER2 is off DNA. The CLOCK-BMAL1 heterodimer interacts with GSK3B. Interacts with KDM5A. Interacts with KMT2A; in a circadian manner. Interacts with UBE3A. Interacts with PRKCG. Interacts with MAGEL2. Interacts with NCOA2. Interacts with THRAP3. The CLOCK-BMAL1 heterodimer interacts with PASD1. Interacts with PASD1. Interacts with USP9X. Interacts with PIWIL2 (via PIWI domain). Interacts with HDAC3. Interacts with HNF4A. Ubiquitinated, leading to its proteasomal degradation. Deubiquitinated by USP9X. Post-translationally, O-glycosylated; contains O-GlcNAc. O-glycosylation by OGT prevents protein degradation by inhibiting ubiquitination. It also stabilizes the CLOCK-BMAL1 heterodimer thereby increasing CLOCK-BMAL1-mediated transcription of genes in the negative loop of the circadian clock such as PER1/2/3 and CRY1/2. In terms of processing, acetylated on Lys-538 by CLOCK during the repression phase of the circadian cycle. Acetylation facilitates recruitment of CRY1 protein and initiates the repression phase of the circadian cycle. Acetylated at Lys-538 by KAT5 during the activation phase of the cycle, leading to recruitment of the positive transcription elongation factor b (P-TEFb) and BRD4, followed by productive elongation of circadian transcripts. Deacetylated by SIRT1, which may result in decreased protein stability. Phosphorylated upon dimerization with CLOCK. Phosphorylation enhances the transcriptional activity, alters the subcellular localization and decreases the stability of the CLOCK-BMAL1 heterodimer by promoting its degradation. Phosphorylation shows circadian variations in the liver with a peak between CT10 to CT14. Phosphorylation at Ser-90 by CK2 is essential for its nuclear localization, its interaction with CLOCK and controls CLOCK nuclear entry. Dephosphorylation at Ser-78 is important for dimerization with CLOCK and transcriptional activity. Post-translationally, sumoylated on Lys-259 upon dimerization with CLOCK. Predominantly conjugated to poly-SUMO2/3 rather than SUMO1 and the level of these conjugates undergo rhythmic variation, peaking at CT9-CT12. Sumoylation localizes it exclusively to the PML body and promotes its ubiquitination in the PML body, ubiquitin-dependent proteasomal degradation and the transcriptional activity of the CLOCK-BMAL1 heterodimer. In terms of processing, undergoes lysosome-mediated degradation in a time-dependent manner in the liver. Hair follicles (at protein level). Highly expressed in the adult brain, skeletal muscle and heart.

Its subcellular location is the nucleus. It is found in the cytoplasm. It localises to the PML body. Its activity is regulated as follows. There is conflicting data about the effect of NAD cofactors on activity. PubMed:11441146 suggests that the redox state of the cell can modulate the transcriptional activity of the CLOCK-BMAL1 heterodimer; NADH and NADPH enhance the DNA-binding activity of the heterodimer. PubMed:23229515 reports that NADH and NADPH have no significant effect on DNA-binding activity of the CLOCK-BMAL1 heterodimer. Its function is as follows. Transcriptional activator which forms a core component of the circadian clock. The circadian clock, an internal time-keeping system, regulates various physiological processes through the generation of approximately 24 hour circadian rhythms in gene expression, which are translated into rhythms in metabolism and behavior. It is derived from the Latin roots 'circa' (about) and 'diem' (day) and acts as an important regulator of a wide array of physiological functions including metabolism, sleep, body temperature, blood pressure, endocrine, immune, cardiovascular, and renal function. Consists of two major components: the central clock, residing in the suprachiasmatic nucleus (SCN) of the brain, and the peripheral clocks that are present in nearly every tissue and organ system. Both the central and peripheral clocks can be reset by environmental cues, also known as Zeitgebers (German for 'timegivers'). The predominant Zeitgeber for the central clock is light, which is sensed by retina and signals directly to the SCN. The central clock entrains the peripheral clocks through neuronal and hormonal signals, body temperature and feeding-related cues, aligning all clocks with the external light/dark cycle. Circadian rhythms allow an organism to achieve temporal homeostasis with its environment at the molecular level by regulating gene expression to create a peak of protein expression once every 24 hours to control when a particular physiological process is most active with respect to the solar day. Transcription and translation of core clock components (CLOCK, NPAS2, BMAL1, BMAL2, PER1, PER2, PER3, CRY1 and CRY2) plays a critical role in rhythm generation, whereas delays imposed by post-translational modifications (PTMs) are important for determining the period (tau) of the rhythms (tau refers to the period of a rhythm and is the length, in time, of one complete cycle). A diurnal rhythm is synchronized with the day/night cycle, while the ultradian and infradian rhythms have a period shorter and longer than 24 hours, respectively. Disruptions in the circadian rhythms contribute to the pathology of cardiovascular diseases, cancer, metabolic syndromes and aging. A transcription/translation feedback loop (TTFL) forms the core of the molecular circadian clock mechanism. Transcription factors, CLOCK or NPAS2 and BMAL1 or BMAL2, form the positive limb of the feedback loop, act in the form of a heterodimer and activate the transcription of core clock genes and clock-controlled genes (involved in key metabolic processes), harboring E-box elements (5'-CACGTG-3') within their promoters. The core clock genes: PER1/2/3 and CRY1/2 which are transcriptional repressors form the negative limb of the feedback loop and interact with the CLOCK|NPAS2-BMAL1|BMAL2 heterodimer inhibiting its activity and thereby negatively regulating their own expression. This heterodimer also activates nuclear receptors NR1D1/2 and RORA/B/G, which form a second feedback loop and which activate and repress BMAL1 transcription, respectively. BMAL1 positively regulates myogenesis and negatively regulates adipogenesis via the transcriptional control of the genes of the canonical Wnt signaling pathway. Plays a role in normal pancreatic beta-cell function; regulates glucose-stimulated insulin secretion via the regulation of antioxidant genes NFE2L2/NRF2 and its targets SESN2, PRDX3, CCLC and CCLM. Negatively regulates the mTORC1 signaling pathway; regulates the expression of MTOR and DEPTOR. Controls diurnal oscillations of Ly6C inflammatory monocytes; rhythmic recruitment of the PRC2 complex imparts diurnal variation to chemokine expression that is necessary to sustain Ly6C monocyte rhythms. Regulates the expression of HSD3B2, STAR, PTGS2, CYP11A1, CYP19A1 and LHCGR in the ovary and also the genes involved in hair growth. Plays an important role in adult hippocampal neurogenesis by regulating the timely entry of neural stem/progenitor cells (NSPCs) into the cell cycle and the number of cell divisions that take place prior to cell-cycle exit. Regulates the circadian expression of CIART and KLF11. The CLOCK-BMAL1 heterodimer regulates the circadian expression of SERPINE1/PAI1, VWF, B3, CCRN4L/NOC, NAMPT, DBP, MYOD1, PPARGC1A, PPARGC1B, SIRT1, GYS2, F7, NGFR, GNRHR, BHLHE40/DEC1, ATF4, MTA1, KLF10 and also genes implicated in glucose and lipid metabolism. Promotes rhythmic chromatin opening, regulating the DNA accessibility of other transcription factors. The NPAS2-BMAL1 heterodimer positively regulates the expression of MAOA, F7 and LDHA and modulates the circadian rhythm of daytime contrast sensitivity by regulating the rhythmic expression of adenylate cyclase type 1 (ADCY1) in the retina. The preferred binding motif for the CLOCK-BMAL1 heterodimer is 5'-CACGTGA-3', which contains a flanking adenine nucleotide at the 3-prime end of the canonical 6-nucleotide E-box sequence. CLOCK specifically binds to the half-site 5'-CAC-3', while BMAL1 binds to the half-site 5'-GTGA-3'. The CLOCK-BMAL1 heterodimer also recognizes the non-canonical E-box motifs 5'-AACGTGA-3' and 5'-CATGTGA-3'. Essential for the rhythmic interaction of CLOCK with ASS1 and plays a critical role in positively regulating CLOCK-mediated acetylation of ASS1. Plays a role in protecting against lethal sepsis by limiting the expression of immune checkpoint protein CD274 in macrophages in a PKM2-dependent manner. Regulates the diurnal rhythms of skeletal muscle metabolism via transcriptional activation of genes promoting triglyceride synthesis (DGAT2) and metabolic efficiency (COQ10B). (Microbial infection) Regulates SARS coronavirus-2/SARS-CoV-2 entry and replication in lung epithelial cells probably through the post-transcriptional regulation of ACE2 and interferon-stimulated gene expression. The polypeptide is Basic helix-loop-helix ARNT-like protein 1 (Homo sapiens (Human)).